The following is a 340-amino-acid chain: MICLLRTARLSARLLFASAAAPCRRASRFNVPPSAEFVARPVGVCSMLRLPVQTSAEGLDAAFVGVPLDTGTSNRPGARFGPQQIRAESVMVRRYNASTGAAPFDSLLVADVGDVNVNLYNLPDSCRRIRESYQKIVASGCVPLTLGGDHSITYPILQAVAEKHGPVGLVHVDAHTDTSDMALGEKIYHGTPFRRCVDEGLLDCSRVVQIGIRGSSYAPNPYKYCWDQGFRVVPAEECWMKSLVPLMGEVRQQMGDGPVYISFDIDGLDPAYAPGTGTPEIAGLTPMQALEIIRGCKGLNIVGCDLVEVAPIYDVSGNTALLGANLLFEMLCVLPGVKTM.

6 residues coordinate Mn(2+): His150, Asp173, His175, Asp177, Asp264, and Asp266.

The protein belongs to the arginase family. Agmatinase subfamily. It depends on Mn(2+) as a cofactor.

It localises to the mitochondrion. The enzyme catalyses agmatine + H2O = urea + putrescine. Its pathway is amine and polyamine biosynthesis; putrescine biosynthesis via agmatine pathway; putrescine from agmatine: step 1/1. The protein is Agmatinase, mitochondrial (AGMAT) of Gallus gallus (Chicken).